A 180-amino-acid polypeptide reads, in one-letter code: Interleukin-17B (180 aa).

Residues 1–22 (MDWPHSLLFLLAISIFLAPSHP) form the signal peptide. The interval 22 to 44 (PRNTKGKRKGQGRPSPLAPGPHQ) is disordered. The segment covering 23 to 32 (RNTKGKRKGQ) has biased composition (basic residues). Asn-75 carries N-linked (GlcNAc...) asparagine glycosylation. Disulfide bonds link Cys-121/Cys-176 and Cys-126/Cys-178.

Belongs to the IL-17 family.

It localises to the secreted. Functionally, stimulates the release of tumor necrosis factor alpha and IL-1-beta from the monocytic cell line THP-1. This Mus musculus (Mouse) protein is Interleukin-17B (Il17b).